Here is a 224-residue protein sequence, read N- to C-terminus: Giant hemoglobin linker AV-1 chain (224 aa).

The LDL-receptor class A domain maps to 62-103; the sequence is HWCPSKYHRCGNSPQCMSNMAFCDGVNDCKNHFDEDENRCVV. 3 cysteine pairs are disulfide-bonded: cysteine 64/cysteine 77, cysteine 71/cysteine 90, and cysteine 84/cysteine 101. Asparagine 108 is a glycosylation site (N-linked (GlcNAc...) asparagine).

Giant hemoglobin is composed of four heme-containing chains (AI to AIV), and two linker chains (AV and AVI).

Functionally, acts as a linker for the assembly of heme-containing chains in the construction of giant hemoglobin. This chain is Giant hemoglobin linker AV-1 chain, found in Lamellibrachia sp. (Deep-sea giant tube worm).